We begin with the raw amino-acid sequence, 319 residues long: Glycine--tRNA ligase alpha subunit (319 aa).

It belongs to the class-II aminoacyl-tRNA synthetase family. Tetramer of two alpha and two beta subunits.

The protein localises to the cytoplasm. The enzyme catalyses tRNA(Gly) + glycine + ATP = glycyl-tRNA(Gly) + AMP + diphosphate. The sequence is that of Glycine--tRNA ligase alpha subunit from Coxiella burnetii (strain CbuK_Q154) (Coxiella burnetii (strain Q154)).